Consider the following 258-residue polypeptide: HTH-type transcriptional repressor GlcR (258 aa).

Residues 3 to 58 enclose the HTH deoR-type domain; that stretch reads QEERLVAILDFLKQHNRITTEQICTLLQVSRDTARRDLVKLEEQNAIIRTRGGAIL. The H-T-H motif DNA-binding region spans 20–39; it reads ITTEQICTLLQVSRDTARRD.

Its function is as follows. Plays a role in carbon catabolite repression (CCR). Specifically required for transcriptional repression of the levanase operon by glucose but not by other sugars. The polypeptide is HTH-type transcriptional repressor GlcR (glcR) (Bacillus subtilis (strain 168)).